The chain runs to 942 residues: Exopolysaccharide phosphotransferase SCO2592 (942 aa).

Belongs to the stealth family.

The polypeptide is Exopolysaccharide phosphotransferase SCO2592 (Streptomyces coelicolor (strain ATCC BAA-471 / A3(2) / M145)).